The sequence spans 353 residues: Photosystem II protein D1 (353 aa).

Position 2 is an N-acetylthreonine (Thr-2). At Thr-2 the chain carries Phosphothreonine. The next 3 helical transmembrane spans lie at 29 to 46 (YIGW…TATS), 118 to 133 (HFLL…EWEL), and 142 to 156 (WIAV…AATA). His-118 is a chlorophyll a binding site. Pheophytin a is bound at residue Tyr-126. Residues Asp-170 and Glu-189 each contribute to the [CaMn4O5] cluster site. A helical transmembrane segment spans residues 197-218 (FHMLGVAGVFGGSLFSAMHGSL). Chlorophyll a is bound at residue His-198. Residues His-215 and 264–265 (SF) contribute to the a quinone site. His-215 provides a ligand contact to Fe cation. A Fe cation-binding site is contributed by His-272. Residues 274-288 (FLAAWPVVGIWFTAL) traverse the membrane as a helical segment. [CaMn4O5] cluster contacts are provided by His-332, Glu-333, Asp-342, and Ala-344. Positions 345–353 (ALEVPSLNG) are excised as a propeptide.

Belongs to the reaction center PufL/M/PsbA/D family. PSII is composed of 1 copy each of membrane proteins PsbA, PsbB, PsbC, PsbD, PsbE, PsbF, PsbH, PsbI, PsbJ, PsbK, PsbL, PsbM, PsbT, PsbX, PsbY, PsbZ, Psb30/Ycf12, at least 3 peripheral proteins of the oxygen-evolving complex and a large number of cofactors. It forms dimeric complexes. The D1/D2 heterodimer binds P680, chlorophylls that are the primary electron donor of PSII, and subsequent electron acceptors. It shares a non-heme iron and each subunit binds pheophytin, quinone, additional chlorophylls, carotenoids and lipids. D1 provides most of the ligands for the Mn4-Ca-O5 cluster of the oxygen-evolving complex (OEC). There is also a Cl(-1) ion associated with D1 and D2, which is required for oxygen evolution. The PSII complex binds additional chlorophylls, carotenoids and specific lipids. is required as a cofactor. Tyr-161 forms a radical intermediate that is referred to as redox-active TyrZ, YZ or Y-Z. Post-translationally, C-terminally processed by CTPA; processing is essential to allow assembly of the oxygen-evolving complex and thus photosynthetic growth.

The protein resides in the plastid. The protein localises to the chloroplast thylakoid membrane. The enzyme catalyses 2 a plastoquinone + 4 hnu + 2 H2O = 2 a plastoquinol + O2. Its function is as follows. Photosystem II (PSII) is a light-driven water:plastoquinone oxidoreductase that uses light energy to abstract electrons from H(2)O, generating O(2) and a proton gradient subsequently used for ATP formation. It consists of a core antenna complex that captures photons, and an electron transfer chain that converts photonic excitation into a charge separation. The D1/D2 (PsbA/PsbD) reaction center heterodimer binds P680, the primary electron donor of PSII as well as several subsequent electron acceptors. This chain is Photosystem II protein D1, found in Oryza nivara (Indian wild rice).